Consider the following 104-residue polypeptide: Transcription factor ILI1 (104 aa).

Positions 1-11 (MSSSRRSRSRR) are enriched in basic residues. The disordered stretch occupies residues 1–27 (MSSSRRSRSRRAGSSVPSSSSSSRTSI). Positions 12-27 (AGSSVPSSSSSSRTSI) are enriched in low complexity. The bHLH domain maps to 16 to 71 (VPSSSSSSRTSISEDQIAELLSKLQALLPESQARNGAHRGSAARVLQETCSYIRSL).

Belongs to the bHLH protein family. As to quaternary structure, interacts with IBH1.

Atypical and probable non DNA-binding bHLH transcription factor that acts as a positive regulator of cell elongation and plant development. Binds the transcription repressor IBH1 and forms a heterodimer of antagonistic bHLH transcription factors that function downstream of BZR1 to mediate brassinosteroid regulation of cell elongation and lamina inclination. This is Transcription factor ILI1 (ILI1) from Oryza sativa subsp. indica (Rice).